We begin with the raw amino-acid sequence, 275 residues long: Mitochondrial outer membrane porin (275 aa).

Belongs to the eukaryotic mitochondrial porin (TC 1.B.8.1) family.

It localises to the mitochondrion outer membrane. In terms of biological role, forms a channel through the cell membrane that allows diffusion of small hydrophilic molecules. The channel adopts an open conformation at low or zero membrane potential and a closed conformation at potentials above 30-40 mV. The open state has a weak anion selectivity whereas the closed state is cation-selective. This Triticum aestivum (Wheat) protein is Mitochondrial outer membrane porin (VDAC1).